Here is a 381-residue protein sequence, read N- to C-terminus: Protein RecA (381 aa).

79-86 (GPESSGKT) is an ATP binding site.

The protein belongs to the RecA family.

The protein localises to the cytoplasm. Its function is as follows. Can catalyze the hydrolysis of ATP in the presence of single-stranded DNA, the ATP-dependent uptake of single-stranded DNA by duplex DNA, and the ATP-dependent hybridization of homologous single-stranded DNAs. It interacts with LexA causing its activation and leading to its autocatalytic cleavage. This Streptococcus parasanguinis protein is Protein RecA.